The following is a 369-amino-acid chain: tRNA/tmRNA (uracil-C(5))-methyltransferase (369 aa).

S-adenosyl-L-methionine-binding residues include Gln193, Tyr221, Asn226, Glu242, and Asp302. The active-site Nucleophile is Cys327. The active-site Proton acceptor is Glu361.

It belongs to the class I-like SAM-binding methyltransferase superfamily. RNA M5U methyltransferase family. TrmA subfamily.

The enzyme catalyses uridine(54) in tRNA + S-adenosyl-L-methionine = 5-methyluridine(54) in tRNA + S-adenosyl-L-homocysteine + H(+). It carries out the reaction uridine(341) in tmRNA + S-adenosyl-L-methionine = 5-methyluridine(341) in tmRNA + S-adenosyl-L-homocysteine + H(+). Its function is as follows. Dual-specificity methyltransferase that catalyzes the formation of 5-methyluridine at position 54 (m5U54) in all tRNAs, and that of position 341 (m5U341) in tmRNA (transfer-mRNA). In Sulfurimonas denitrificans (strain ATCC 33889 / DSM 1251) (Thiomicrospira denitrificans (strain ATCC 33889 / DSM 1251)), this protein is tRNA/tmRNA (uracil-C(5))-methyltransferase.